The chain runs to 398 residues: Acetate kinase (398 aa).

Residue Asn7 participates in Mg(2+) binding. Lys14 is an ATP binding site. Residue Arg91 participates in substrate binding. The Proton donor/acceptor role is filled by Asp148. Residues 208–212, 283–285, and 331–335 each bind ATP; these read HLGNG, DFR, and GIGEH. Mg(2+) is bound at residue Glu386.

This sequence belongs to the acetokinase family. As to quaternary structure, homodimer. Requires Mg(2+) as cofactor. Mn(2+) serves as cofactor.

The protein resides in the cytoplasm. It carries out the reaction acetate + ATP = acetyl phosphate + ADP. The protein operates within metabolic intermediate biosynthesis; acetyl-CoA biosynthesis; acetyl-CoA from acetate: step 1/2. Catalyzes the formation of acetyl phosphate from acetate and ATP. Can also catalyze the reverse reaction. The protein is Acetate kinase of Clostridium botulinum (strain Alaska E43 / Type E3).